A 433-amino-acid polypeptide reads, in one-letter code: Serendipity locus protein delta (433 aa).

A ZAD domain is found at Met1–Lys90. Zn(2+) is bound by residues Cys4, Cys7, Cys61, and Cys64. The disordered stretch occupies residues Asp141 to Glu162. A compositionally biased stretch (acidic residues) spans Val149–Glu162. The short motif at Pro187–Lys193 is the Nuclear localization signal element. 7 consecutive C2H2-type zinc fingers follow at residues Gln194–His217, His223–His245, Lys251–His273, Tyr279–His301, Ile308–His330, His337–His359, and Gly405–His428.

As to quaternary structure, homodimer (via ZAD domain) in solution. Binds DNA as a homodimer. N-terminal regions of the protein are required, in addition to the zinc fingers, for the specificity of chromatin-binding. Predominantly localized to the sub- and supraesophagal ganglia and the ventral nerve cord in the embryo, after dorsal closure.

The protein localises to the nucleus. In terms of biological role, transcriptional activator that controls bicoid gene expression during oogenesis. Found in transcriptionally active cells. Binds to specific sites on polytene chromosomes of third instar larvae. Binds to the consensus DNA sequence 5'-YTAGAGATGGRAA-3'. This is Serendipity locus protein delta (Sry-delta) from Drosophila melanogaster (Fruit fly).